A 409-amino-acid polypeptide reads, in one-letter code: Pectin acetylesterase 4 (409 aa).

Positions 1 to 32 (MVIRSLLQCRTWSKSDWLLASIGIVLIVYSFS) are cleaved as a signal peptide. 2 N-linked (GlcNAc...) asparagine glycosylation sites follow: N36 and N163. Catalysis depends on charge relay system residues S199, D295, and H362. 2 N-linked (GlcNAc...) asparagine glycosylation sites follow: N379 and N406.

The protein belongs to the pectinacetylesterase family.

It localises to the secreted. Its subcellular location is the cell wall. Its function is as follows. Hydrolyzes acetyl esters in homogalacturonan regions of pectin. In type I primary cell wall, galacturonic acid residues of pectin can be acetylated at the O-2 and O-3 positions. Decreasing the degree of acetylation of pectin gels in vitro alters their physical properties. This Arabidopsis thaliana (Mouse-ear cress) protein is Pectin acetylesterase 4.